Here is a 152-residue protein sequence, read N- to C-terminus: MQVFEGKLNGKGLKIGIIVSRFNEFITQKLLAGALDCLTRHEVENTNIDVIWVPGAFEIPLVAKRAVHKDYDAIICLGAVIRGATPHFDYVAAEVAKGIAAVGLEANKPVIFGVLTTDTIEQAIERAGTKAGNKGWEAALAAIEMANLFKKV.

Residues Phe-22, 56–58, and 79–81 contribute to the 5-amino-6-(D-ribitylamino)uracil site; these read AFE and AVI. Residue 84–85 coordinates (2S)-2-hydroxy-3-oxobutyl phosphate; the sequence is AT. His-87 (proton donor) is an active-site residue. Phe-112 lines the 5-amino-6-(D-ribitylamino)uracil pocket. Residue Arg-126 coordinates (2S)-2-hydroxy-3-oxobutyl phosphate.

This sequence belongs to the DMRL synthase family.

The enzyme catalyses (2S)-2-hydroxy-3-oxobutyl phosphate + 5-amino-6-(D-ribitylamino)uracil = 6,7-dimethyl-8-(1-D-ribityl)lumazine + phosphate + 2 H2O + H(+). Its pathway is cofactor biosynthesis; riboflavin biosynthesis; riboflavin from 2-hydroxy-3-oxobutyl phosphate and 5-amino-6-(D-ribitylamino)uracil: step 1/2. Its function is as follows. Catalyzes the formation of 6,7-dimethyl-8-ribityllumazine by condensation of 5-amino-6-(D-ribitylamino)uracil with 3,4-dihydroxy-2-butanone 4-phosphate. This is the penultimate step in the biosynthesis of riboflavin. The sequence is that of 6,7-dimethyl-8-ribityllumazine synthase from Carboxydothermus hydrogenoformans (strain ATCC BAA-161 / DSM 6008 / Z-2901).